A 239-amino-acid polypeptide reads, in one-letter code: 2,3,4,5-tetrahydropyridine-2,6-dicarboxylate N-acetyltransferase (239 aa).

It belongs to the transferase hexapeptide repeat family. DapH subfamily.

The enzyme catalyses (S)-2,3,4,5-tetrahydrodipicolinate + acetyl-CoA + H2O = L-2-acetamido-6-oxoheptanedioate + CoA. The protein operates within amino-acid biosynthesis; L-lysine biosynthesis via DAP pathway; LL-2,6-diaminopimelate from (S)-tetrahydrodipicolinate (acetylase route): step 1/3. Functionally, catalyzes the transfer of an acetyl group from acetyl-CoA to tetrahydrodipicolinate. This is 2,3,4,5-tetrahydropyridine-2,6-dicarboxylate N-acetyltransferase from Staphylococcus aureus (strain MRSA252).